Here is a 174-residue protein sequence, read N- to C-terminus: uncharacterized protein (174 aa).

2 helical membrane-spanning segments follow: residues 8-28 and 146-166; these read FLFIVVFLFHGFMFSVVNYVF and IVSWILYVFLLATLFLSIQFI.

It localises to the cell membrane. This is an uncharacterized protein from Haemophilus influenzae (strain ATCC 51907 / DSM 11121 / KW20 / Rd).